A 67-amino-acid chain; its full sequence is Large ribosomal subunit protein bL35 (67 aa).

It belongs to the bacterial ribosomal protein bL35 family.

The polypeptide is Large ribosomal subunit protein bL35 (Rhizobium etli (strain CIAT 652)).